The primary structure comprises 224 residues: Octanoyltransferase (224 aa).

The 181-residue stretch at 33 to 213 (GTTAETMLLL…ALQAEFGREA (181 aa)) folds into the BPL/LPL catalytic domain. The interval 51–71 (GKRTTDDERPTDGTPVVDVDR) is disordered. Residues 71–78 (RGGKITWH), 143–145 (AIG), and 156–158 (GFA) each bind substrate. The Acyl-thioester intermediate role is filled by cysteine 174.

It belongs to the LipB family.

Its subcellular location is the cytoplasm. It catalyses the reaction octanoyl-[ACP] + L-lysyl-[protein] = N(6)-octanoyl-L-lysyl-[protein] + holo-[ACP] + H(+). It functions in the pathway protein modification; protein lipoylation via endogenous pathway; protein N(6)-(lipoyl)lysine from octanoyl-[acyl-carrier-protein]: step 1/2. Its function is as follows. Catalyzes the transfer of endogenously produced octanoic acid from octanoyl-acyl-carrier-protein onto the lipoyl domains of lipoate-dependent enzymes. Lipoyl-ACP can also act as a substrate although octanoyl-ACP is likely to be the physiological substrate. The sequence is that of Octanoyltransferase from Leifsonia xyli subsp. xyli (strain CTCB07).